A 489-amino-acid polypeptide reads, in one-letter code: Toxin coregulated pilus biosynthesis outer membrane protein C (489 aa).

Positions 1-16 (MKKTIISTLVIGLVSG) are cleaved as a signal peptide. Residue Cys17 is the site of N-palmitoyl cysteine attachment. The S-diacylglycerol cysteine moiety is linked to residue Cys17. Helical transmembrane passes span 174 to 190 (FSSSMQIGGTSGTSSGL), 294 to 308 (AISLSQVGGGLGASY), 402 to 417 (QLVSIGTAQGITLPTV), and 442 to 457 (NYIQNSNGVQLLGGGT).

Its subcellular location is the cell membrane. Involved in TCP pilus biogenesis. The sequence is that of Toxin coregulated pilus biosynthesis outer membrane protein C (tcpC) from Vibrio cholerae serotype O1 (strain ATCC 39315 / El Tor Inaba N16961).